Reading from the N-terminus, the 492-residue chain is 2,3-bisphosphoglycerate-independent phosphoglycerate mutase (492 aa).

The Mn(2+) site is built by aspartate 11 and serine 61. Serine 61 acts as the Phosphoserine intermediate in catalysis. Residues histidine 118, 147–148 (RD), arginine 177, arginine 183, 248–251 (RNDR), and lysine 321 each bind substrate. The Mn(2+) site is built by aspartate 387, histidine 391, aspartate 428, histidine 429, and histidine 446.

It belongs to the BPG-independent phosphoglycerate mutase family. In terms of assembly, monomer. Mn(2+) serves as cofactor.

It carries out the reaction (2R)-2-phosphoglycerate = (2R)-3-phosphoglycerate. It participates in carbohydrate degradation; glycolysis; pyruvate from D-glyceraldehyde 3-phosphate: step 3/5. Functionally, catalyzes the interconversion of 2-phosphoglycerate and 3-phosphoglycerate. The sequence is that of 2,3-bisphosphoglycerate-independent phosphoglycerate mutase from Helicobacter acinonychis (strain Sheeba).